The sequence spans 86 residues: Toxin To8 (86 aa).

A signal peptide spans 1 to 20; the sequence is MTRFVLFISCFFLIGMVVEC. The 63-residue stretch at 21 to 83 folds into the LCN-type CS-alpha/beta domain; sequence KEGYLLGSRG…LWESDTNECG (63 aa). Intrachain disulfides connect C31–C82, C35–C57, C43–C63, and C47–C65. C82 is modified (cysteine amide).

Belongs to the long (4 C-C) scorpion toxin superfamily. Sodium channel inhibitor family. Beta subfamily. Expressed by the venom gland.

Its subcellular location is the secreted. Its function is as follows. Beta toxins bind voltage-independently at site-4 of sodium channels (Nav) and shift the voltage of activation toward more negative potentials thereby affecting sodium channel activation and promoting spontaneous and repetitive firing. The protein is Toxin To8 of Tityus obscurus (Amazonian scorpion).